The following is a 2779-amino-acid chain: Protein lava lamp (2779 aa).

Disordered regions lie at residues 31–62, 79–98, and 110–135; these read LAGS…DSLK, ALRK…SMES, and KTRS…VSLL. The span at 33–51 shows a compositional bias: polar residues; that stretch reads GSSNDLSSLQNVSASTTRG. Phosphoserine is present on residues S34 and S35. A coiled-coil region spans residues 52 to 85; the sequence is TKGKGRLDSLKENLYKQQERLTALKERALRKSQD. Residues 79–91 are compositionally biased toward basic and acidic residues; it reads ALRKSQDERHKSS. Residues S95, S98, S122, and S133 each carry the phosphoserine modification. The stretch at 141–175 forms a coiled coil; the sequence is EKLLMLTQRTEQNRALLEQRKRDLAKSLLSVKSNI. S186, S352, and S354 each carry phosphoserine. Coiled coils occupy residues 220-607 and 659-716; these read ESRV…AESI and GETL…KDLI. The span at 337-352 shows a compositional bias: basic and acidic residues; that stretch reads ERQRNLELEQEQEKAS. Disordered stretches follow at residues 337–366, 622–662, 711–730, and 1716–1753; these read ERQR…DAQV, RPAS…GETL, REKD…QELS, and QAQL…GGDA. Composition is skewed to low complexity over residues 717–730 and 1716–1740; these read SSTS…QELS and QAQL…QSQQ. Coiled-coil stretches lie at residues 751–1733, 1785–1863, and 1941–2433; these read LFEK…QHHH, TIED…KLIQ, and NEAP…QSQN. Disordered regions lie at residues 2348-2367, 2484-2507, 2552-2578, and 2633-2665; these read EDKE…GETV, EEVT…EATS, NRGG…TANE, and TERS…AGSN. A compositionally biased stretch (low complexity) spans 2488–2502; that stretch reads QQQQRELPQSQQSTQ. A coiled-coil region spans residues 2504–2544; that stretch reads EATSDIMQKMQKALETQEMEIVTLKEQLAIRSAEYARLAAQ. A coiled-coil region spans residues 2600-2641; sequence DMRVEEMIVELVQLLEERDHLQLKLSDTLRQLETERSRVSDE. Residues 2643–2665 show a composition bias toward low complexity; sequence SATASSSAASSSSPSKISSAGSN.

In terms of assembly, interacts with CLIP-190 and spectrin separately.

It is found in the golgi apparatus. Its subcellular location is the cytoplasmic vesicle. The protein localises to the autophagosome. In terms of biological role, lva and spectrin may form a Golgi-based scaffold that mediates interaction of Golgi bodies with microtubules and facilitates Golgi-derived membrane secretion required for the formation of furrows during cellularization. Under starvation conditions recruited by ema to developing autophagsosomes where it may function in autophagosome growth. This is Protein lava lamp (lva) from Drosophila melanogaster (Fruit fly).